The primary structure comprises 273 residues: Probable NAD(P)H dehydrogenase (quinone) FQR1-like 2 (273 aa).

Residues 1-60 (MGKGGGCVPSKKKKPATTGDGPGIDDDNDATNAPIQIDDDQTTIDGDRTTATNTGGTTTP) are disordered. The span at 49–60 (TTATNTGGTTTP) shows a compositional bias: low complexity. A Flavodoxin-like domain is found at 75 to 263 (IFVVFYSMYG…ALAEHQGNYM (189 aa)). FMN-binding positions include 81 to 85 (SMYGH), 183 to 236 (FFVS…SPYG), and H207. Y83 is a binding site for NAD(+).

It belongs to the WrbA family. It depends on FMN as a cofactor.

The protein resides in the cell membrane. The catalysed reaction is a quinone + NADH + H(+) = a quinol + NAD(+). The enzyme catalyses a quinone + NADPH + H(+) = a quinol + NADP(+). Functionally, catalyzes the transfer of electrons from NADH and NADPH to reduce quinone to the hydroquinone state. In Arabidopsis thaliana (Mouse-ear cress), this protein is Probable NAD(P)H dehydrogenase (quinone) FQR1-like 2.